A 412-amino-acid chain; its full sequence is MRGEIISVGTELLLGQIVNTNAKYLSERLALLGIDIYFHTNVGDNEERLKQCLKIAYERSELIITTGGLGPTVDDITKETIASFLNLPLVESEEAKQEIINFFERIGQKPTENNFKQALFPAGSKILPNKNGTAPGFILEKEGKIFVVLPGPPSELIPMFEEHVYPYLKRFTSETIKSRVLKIFGLGESKVEEMVRPLLQGSNPTVAPLVGDGYVTLRITAKGKEEEVYEMISQVEKKIREILGEYIYAVDDEEMEEIVIKLLQKRGFTLATAESCTGGLLAKKITDVPGASKVFNLGVVTYSNEAKEKVLGVKKSTLDAHGAVSPETAKEMAENVRVLAKSDLGLSTTGIAGPSGGSPEKPVGLVYVGFATPEKTYVKKLMLSGNRDRIRTRSMLHAFDMVRRYLEGRQID.

This sequence belongs to the CinA family.

In Caldanaerobacter subterraneus subsp. tengcongensis (strain DSM 15242 / JCM 11007 / NBRC 100824 / MB4) (Thermoanaerobacter tengcongensis), this protein is Putative competence-damage inducible protein.